We begin with the raw amino-acid sequence, 3302 residues long: Xin actin-binding repeat-containing protein 2 (3302 aa).

The tract at residues 166 to 204 (NDSEETLKPSSAMGTSSYTSARQSKETSTSSYSNHSLTS) is disordered. Residues 173-187 (KPSSAMGTSSYTSAR) are compositionally biased toward polar residues. A compositionally biased stretch (low complexity) spans 191–204 (ETSTSSYSNHSLTS). Xin repeat units lie at residues 306 to 321 (AGVQ…TNDS), 341 to 356 (GEVQ…QPLD), 381 to 396 (GDVK…QPID), 418 to 433 (GDVC…RPLD), 456 to 471 (GDVK…QQLD), 496 to 511 (GNVK…QPLY), and 534 to 549 (GDVR…QPLD). A Phosphoserine modification is found at Ser565. Xin repeat units lie at residues 572–587 (GEVG…QPLE) and 606–621 (IDVS…QPLD). Phosphoserine is present on Ser633. 5 Xin repeats span residues 640 to 655 (GDVK…LPIE), 677 to 692 (GDVK…QRLE), 713 to 728 (GHVK…NNLI), 744 to 759 (GTVE…TPLY), and 782 to 797 (GDVR…RPID). A Phosphoserine modification is found at Ser813. Xin repeat units follow at residues 820–835 (GNVK…QPLD), 859–874 (GDVK…QPME), 892–907 (GDVR…QPLD), 930–945 (GDVR…ENLD), 965–980 (GDVS…QSLD), 1004–1019 (GNVL…QPID), 1040–1055 (GDVR…FSLD), 1077–1092 (GDVK…QPLY), 1115–1130 (GDVR…KPLD), 1152–1167 (GDVS…QPLD), and 1186–1201 (GNVQ…EGGD). Ser1210 is subject to Phosphoserine. Xin repeat units lie at residues 1217-1232 (GNVK…HSID), 1254-1269 (GDVK…QTLD), and 1289-1304 (SDVK…TPIH). Ser1573 is modified (phosphoserine). Disordered regions lie at residues 1848-1882 (VSAS…VDKT), 1920-1939 (AETQ…NPAG), 1957-2002 (EKQN…APDK), 2039-2296 (YPDC…KPYM), 2311-2378 (RQQR…SKAV), 2546-2593 (YAAK…ESRV), and 2626-2687 (NFQQ…RESQ). Residues 1859–1873 (KTKESENVRESKDDV) show a composition bias toward basic and acidic residues. Position 1930 is a phosphothreonine (Thr1930). Ser1935 is subject to Phosphoserine. Over residues 1957–1969 (EKQNSNKDMRKND) the composition is skewed to basic and acidic residues. Composition is skewed to pro residues over residues 2051–2062 (LPPPSPPPPPPS) and 2125–2134 (SLPPPPPTAP). The segment covering 2135–2145 (SQPAHLLSSSV) has biased composition (low complexity). At Ser2158 the chain carries Phosphoserine. Basic and acidic residues predominate over residues 2158-2167 (SRKETLDSHQ). Residues 2181 to 2186 (PPTLPK) are interacts with NEBL. 3 positions are modified to phosphoserine: Ser2198, Ser2211, and Ser2252. Positions 2205–2243 (ELERSLSDVEIKTTLSKDQKSSLVAESREHTEAKQEVFR) are enriched in basic and acidic residues. 2 stretches are compositionally biased toward polar residues: residues 2251–2263 (LSIS…SQTV) and 2282–2292 (SFPSGSEQQSP). Residues 2303-2328 (LMIAEEKYRQQREELEKQRRESSCHS) are a coiled coil. Basic and acidic residues-rich tracts occupy residues 2311-2325 (RQQR…RESS) and 2333-2350 (ETQH…ELQK). Residues 2626-2635 (NFQQTQTQTS) show a composition bias toward polar residues. Positions 2636–2659 (RIEHKELSQPYSEKKCLRDKDKQQ) are enriched in basic and acidic residues. A compositionally biased stretch (polar residues) spans 2674-2685 (TQKQSSFSSVRE). Coiled coils occupy residues 2696–2724 (NILE…SNKS) and 2751–2777 (RVAM…EMLV). The tract at residues 2835–2934 (RQVATHSEAA…PSPPRSRSEQ (100 aa)) is disordered. Polar residues-rich tracts occupy residues 2836–2850 (QVAT…NPAK) and 2891–2903 (KSEL…NNSC). The segment covering 2907 to 2916 (LPRRPMEHTS) has biased composition (basic and acidic residues). Phosphoserine occurs at positions 2987 and 3225. The segment at 3278-3302 (QGNLHNLSKDGLSNGVPRSRPAEFS) is disordered.

The protein belongs to the Xin family. Interacts with ACTN2. Interacts with F-actin. Interacts with NEBL (via SH3 domain). Interacts with Kcna5/Kv1.5 and Scn5a/Nav1.5; the interactions are required for normal action potential configuration in the heart.

It localises to the cell junction. In terms of biological role, protects actin filaments from depolymerization. Required for correct morphology of cell membranes and maturation of intercalated disks of cardiomyocytes via facilitating localization of XIRP1 and CDH2 to the termini of aligned mature cardiomyocytes. Thereby required for correct postnatal heart development and growth regulation that is crucial for overall heart morphology and diastolic function. Required for normal electrical conduction in the heart including formation of the infranodal ventricular conduction system and normal action potential configuration, as a result of its interaction with the cardiac ion channel components Scn5a/Nav1.5 and Kcna5/Kv1.5. Required for regular actin filament spacing of the paracrystalline array in both inner and outer hair cells of the cochlea, thereby required for maintenance of stereocilia morphology. The protein is Xin actin-binding repeat-containing protein 2 of Rattus norvegicus (Rat).